The following is a 213-amino-acid chain: Pyrrolidone-carboxylate peptidase (213 aa).

Residues E78, C141, and H165 contribute to the active site.

The protein belongs to the peptidase C15 family. In terms of assembly, homotetramer.

It localises to the cytoplasm. The enzyme catalyses Release of an N-terminal pyroglutamyl group from a polypeptide, the second amino acid generally not being Pro.. Functionally, removes 5-oxoproline from various penultimate amino acid residues except L-proline. This chain is Pyrrolidone-carboxylate peptidase, found in Clostridium perfringens (strain ATCC 13124 / DSM 756 / JCM 1290 / NCIMB 6125 / NCTC 8237 / Type A).